The chain runs to 117 residues: MSKLSRKSILDEDEDVEEILPKTRGDERSTWVSSSSFVSSSLIFCKCVVTVVELDVGVALLGIVGRVVPLYTVTLLEPEFLNLGGELSWCSMTNFCELFFYFFSFFFSKKRPNIDSK.

The next 3 helical transmembrane spans lie at 32–52, 56–76, and 87–107; these read VSSSSFVSSSLIFCKCVVTVV, VGVALLGIVGRVVPLYTVTLL, and LSWCSMTNFCELFFYFFSFFF.

It localises to the membrane. This is an uncharacterized protein from Saccharomyces cerevisiae (strain ATCC 204508 / S288c) (Baker's yeast).